Here is a 496-residue protein sequence, read N- to C-terminus: Cobyric acid synthase (496 aa).

The 191-residue stretch at 255–445 (DLEIAVLKLP…LHGLLDNGPW (191 aa)) folds into the GATase cobBQ-type domain. Residue Cys-336 is the Nucleophile of the active site. His-437 is an active-site residue.

Belongs to the CobB/CobQ family. CobQ subfamily.

It participates in cofactor biosynthesis; adenosylcobalamin biosynthesis. In terms of biological role, catalyzes amidations at positions B, D, E, and G on adenosylcobyrinic A,C-diamide. NH(2) groups are provided by glutamine, and one molecule of ATP is hydrogenolyzed for each amidation. The chain is Cobyric acid synthase from Parasynechococcus marenigrum (strain WH8102).